The chain runs to 388 residues: Purple acid phosphatase 19 (388 aa).

The first 24 residues, 1–24 (MGLNHLTLVCSAIALLSIFVVSQA), serve as a signal peptide directing secretion. 2 N-linked (GlcNAc...) asparagine glycosylation sites follow: N97 and N111. Residues D145 and Y148 each contribute to the Fe cation site. Zn(2+) is bound at residue D145. N182 contributes to the Zn(2+) binding site. N182 contacts substrate. N-linked (GlcNAc...) asparagine glycosylation is present at N226. Zn(2+) is bound at residue H238. The active-site Proton donor is the H248. A Zn(2+)-binding site is contributed by H275. 275–277 (HVH) contacts substrate. Position 277 (H277) interacts with Fe cation. Residues N291 and N348 are each glycosylated (N-linked (GlcNAc...) asparagine).

It belongs to the metallophosphoesterase superfamily. Purple acid phosphatase family. As to quaternary structure, homodimer. Fe cation serves as cofactor. It depends on Zn(2+) as a cofactor. As to expression, specifically expressed in flowers.

It localises to the secreted. The catalysed reaction is a phosphate monoester + H2O = an alcohol + phosphate. This is Purple acid phosphatase 19 (PAP19) from Arabidopsis thaliana (Mouse-ear cress).